The following is a 263-amino-acid chain: Type III pantothenate kinase (263 aa).

Residue 6–13 (DVGNTRIK) coordinates ATP. Substrate-binding positions include Tyr-92 and 99-102 (GTDR). Asp-101 acts as the Proton acceptor in catalysis. Thr-124 is a binding site for ATP. Thr-174 is a binding site for substrate.

Belongs to the type III pantothenate kinase family. As to quaternary structure, homodimer. It depends on NH4(+) as a cofactor. K(+) is required as a cofactor.

The protein localises to the cytoplasm. It carries out the reaction (R)-pantothenate + ATP = (R)-4'-phosphopantothenate + ADP + H(+). It functions in the pathway cofactor biosynthesis; coenzyme A biosynthesis; CoA from (R)-pantothenate: step 1/5. Functionally, catalyzes the phosphorylation of pantothenate (Pan), the first step in CoA biosynthesis. The protein is Type III pantothenate kinase of Azoarcus sp. (strain BH72).